Reading from the N-terminus, the 681-residue chain is Sorting nexin-41 (681 aa).

The span at 1–12 shows a compositional bias: acidic residues; the sequence is MSTDNLFEDIEQ. Residues 1–94 form a disordered region; sequence MSTDNLFEDI…HNTSLNNGYP (94 aa). Polar residues predominate over residues 13–24; that stretch reads DNNPSFYGNPSI. In terms of domain architecture, PX spans 113–236; it reads NDSQLQVDII…KFFDPNYELC (124 aa). A 1,2-diacyl-sn-glycero-3-phospho-(1D-myo-inositol-3-phosphate) contacts are provided by Arg151, Ser153, Lys177, and Arg200. Disordered regions lie at residues 475–505 and 558–597; these read LASRISTDNDSNNSNNSGNNNNDGDLDTENF and TATGSTEQQSQQQSAPNSPQREQQQQQSQSQSHHSHQTSI. 2 stretches are compositionally biased toward low complexity: residues 482–497 and 558–589; these read DNDSNNSNNSGNNNND and TATGSTEQQSQQQSAPNSPQREQQQQQSQSQS.

Belongs to the sorting nexin family.

Its subcellular location is the endosome membrane. The protein resides in the endomembrane system. In terms of biological role, may be required for cytoplasm to vacuole transport (Cvt) and pexophagy. This Candida albicans (strain SC5314 / ATCC MYA-2876) (Yeast) protein is Sorting nexin-41 (SNX41).